We begin with the raw amino-acid sequence, 330 residues long: HTH-type transcriptional regulator GanR (330 aa).

One can recognise an HTH lacI-type domain in the interval Ala-2–Lys-57. Positions Ile-4–Asn-23 form a DNA-binding region, H-T-H motif.

In terms of biological role, negatively regulates the expression of the ganSPQAB operon. Inhibits transcription of the operon by binding to an operator in the promoter region. In the presence of galactobiose, GanR dissociates from the promoter, resulting in the expression of the gan operon. This chain is HTH-type transcriptional regulator GanR, found in Bacillus subtilis (strain 168).